Consider the following 323-residue polypeptide: tRNA U34 carboxymethyltransferase (323 aa).

Residues K91, W105, K110, G130, 181-182, M196, Y200, and R315 contribute to the carboxy-S-adenosyl-L-methionine site; that span reads IE.

It belongs to the class I-like SAM-binding methyltransferase superfamily. CmoB family. As to quaternary structure, homotetramer.

It carries out the reaction carboxy-S-adenosyl-L-methionine + 5-hydroxyuridine(34) in tRNA = 5-carboxymethoxyuridine(34) in tRNA + S-adenosyl-L-homocysteine + H(+). Functionally, catalyzes carboxymethyl transfer from carboxy-S-adenosyl-L-methionine (Cx-SAM) to 5-hydroxyuridine (ho5U) to form 5-carboxymethoxyuridine (cmo5U) at position 34 in tRNAs. The chain is tRNA U34 carboxymethyltransferase from Serratia proteamaculans (strain 568).